We begin with the raw amino-acid sequence, 305 residues long: UDP-3-O-acyl-N-acetylglucosamine deacetylase (305 aa).

Zn(2+)-binding residues include histidine 79, histidine 238, and aspartate 242. The active-site Proton donor is histidine 265.

This sequence belongs to the LpxC family. The cofactor is Zn(2+).

The enzyme catalyses a UDP-3-O-[(3R)-3-hydroxyacyl]-N-acetyl-alpha-D-glucosamine + H2O = a UDP-3-O-[(3R)-3-hydroxyacyl]-alpha-D-glucosamine + acetate. Its pathway is glycolipid biosynthesis; lipid IV(A) biosynthesis; lipid IV(A) from (3R)-3-hydroxytetradecanoyl-[acyl-carrier-protein] and UDP-N-acetyl-alpha-D-glucosamine: step 2/6. Catalyzes the hydrolysis of UDP-3-O-myristoyl-N-acetylglucosamine to form UDP-3-O-myristoylglucosamine and acetate, the committed step in lipid A biosynthesis. In Salmonella agona (strain SL483), this protein is UDP-3-O-acyl-N-acetylglucosamine deacetylase.